We begin with the raw amino-acid sequence, 424 residues long: Serine--tRNA ligase (424 aa).

Threonine 232–glutamate 234 contributes to the L-serine binding site. Arginine 263–glutamate 265 is a binding site for ATP. Position 286 (glutamate 286) interacts with L-serine. An ATP-binding site is contributed by glutamate 350–serine 353. Serine 386 contacts L-serine.

The protein belongs to the class-II aminoacyl-tRNA synthetase family. Type-1 seryl-tRNA synthetase subfamily. In terms of assembly, homodimer. The tRNA molecule binds across the dimer.

The protein localises to the cytoplasm. The enzyme catalyses tRNA(Ser) + L-serine + ATP = L-seryl-tRNA(Ser) + AMP + diphosphate + H(+). The catalysed reaction is tRNA(Sec) + L-serine + ATP = L-seryl-tRNA(Sec) + AMP + diphosphate + H(+). It participates in aminoacyl-tRNA biosynthesis; selenocysteinyl-tRNA(Sec) biosynthesis; L-seryl-tRNA(Sec) from L-serine and tRNA(Sec): step 1/1. Catalyzes the attachment of serine to tRNA(Ser). Is also able to aminoacylate tRNA(Sec) with serine, to form the misacylated tRNA L-seryl-tRNA(Sec), which will be further converted into selenocysteinyl-tRNA(Sec). This is Serine--tRNA ligase from Onion yellows phytoplasma (strain OY-M).